A 1906-amino-acid polypeptide reads, in one-letter code: DENN domain-containing protein 4C (1906 aa).

Positions 40-199 (KAPITDIAVI…NVFLCYKKSV (160 aa)) constitute an MABP domain. The uDENN domain maps to 191-363 (VFLCYKKSVP…NIPFPSPQRP (173 aa)). In terms of domain architecture, cDENN spans 384 to 520 (PLPLSGANFS…PCKSLLGTLR (137 aa)). One can recognise a dDENN domain in the interval 522-640 (LYQQLCSVHR…CSFVSDKDTG (119 aa)). Phosphoserine occurs at positions 702, 736, and 740. A PPR repeat occupies 818–852 (DEVCYRVVMQLCGLWVNPVLAVRVLFEMKTARIKP). Residues 904 to 917 (SQVFSISGGQSDQG) are compositionally biased toward polar residues. Disordered stretches follow at residues 904–942 (SQVF…PPEL) and 963–984 (LQPT…SIVK). Positions 920–939 (SKDELVKEGADGHAPEEHTP) are enriched in basic and acidic residues. Thr-966 is modified (phosphothreonine). Residues 966–975 (TPEPQSPTEP) show a composition bias toward pro residues. Ser-971 carries the phosphoserine modification. At Thr-973 the chain carries Phosphothreonine. Ser-987, Ser-1000, Ser-1043, Ser-1058, Ser-1096, and Ser-1123 each carry phosphoserine. Residues 1154–1171 (NSLQSNSHSDQSRDTQAG) are compositionally biased toward polar residues. Residues 1154–1184 (NSLQSNSHSDQSRDTQAGAQDPVNKRSSSYA) are disordered. Residues Ser-1181, Ser-1221, Ser-1240, Ser-1248, and Ser-1274 each carry the phosphoserine modification. The tract at residues 1246–1317 (SCSMELHGEG…PQSPYRAYKD (72 aa)) is disordered. Basic and acidic residues predominate over residues 1281 to 1291 (PPARDSTETEK). The segment covering 1292 to 1302 (SSPAVSSSKTL) has biased composition (polar residues). Phosphoserine occurs at positions 1321, 1333, and 1342. Disordered regions lie at residues 1410 to 1440 (SPNT…GDVG), 1548 to 1577 (STSG…SAEP), and 1596 to 1628 (ASYT…LSKR). A compositionally biased stretch (low complexity) spans 1423–1437 (LTQSNTSLGSSSSSG). Polar residues-rich tracts occupy residues 1548 to 1564 (STSG…SASE) and 1611 to 1628 (GDVQ…LSKR). A phosphoserine mark is found at Ser-1620, Ser-1624, Ser-1626, Ser-1637, and Ser-1796.

Post-translationally, phosphorylated in response to insulin.

The protein localises to the cytoplasmic vesicle membrane. Its subcellular location is the cell membrane. It is found in the cytoplasm. It localises to the cytosol. Its function is as follows. Guanine nucleotide exchange factor (GEF) activating RAB10. Promotes the exchange of GDP to GTP, converting inactive GDP-bound RAB10 into its active GTP-bound form. Thereby, stimulates SLC2A4/GLUT4 glucose transporter-enriched vesicles delivery to the plasma membrane in response to insulin. In Mus musculus (Mouse), this protein is DENN domain-containing protein 4C (Dennd4c).